A 292-amino-acid polypeptide reads, in one-letter code: ATP-dependent Clp protease proteolytic subunit 4, chloroplastic (292 aa).

A chloroplast-targeting transit peptide spans 1–65 (MGTLSLSSSL…LRFANASIEM (65 aa)). The residue at position 66 (S66) is an N-acetylserine. Residue S158 is the Nucleophile of the active site. H183 is an active-site residue.

This sequence belongs to the peptidase S14 family. Component of the chloroplastic Clp protease core complex which consist of at least 16 proteins: CLPP4 (3 copies), CLPP5 (3 copies), CLPR4 (2 copies), ClpP1 (1 copy), CLPP6 (1 copy), CLPR2 (1 copy), CLPT1 (1 copy), CLPT2 (1 copy) and 3 copies of CLPP3 and/or CLPR1 and/or CLPR3. Interacts with CHIP. The core complex is organized in two heptameric rings, one containing CLPP3,4,5,6 in a 1:2:3:1 ratio and the other CLPP1 and CLPR1,2,3,4 in a 3:1:1:1:1 ratio. Post-translationally, ubiquitinated by CHIP. As to expression, mostly expressed in leaves. Also detected in stems, and to a lower extent, in roots (at protein level).

Its subcellular location is the plastid. The protein localises to the chloroplast stroma. It catalyses the reaction Hydrolysis of proteins to small peptides in the presence of ATP and magnesium. alpha-casein is the usual test substrate. In the absence of ATP, only oligopeptides shorter than five residues are hydrolyzed (such as succinyl-Leu-Tyr-|-NHMec, and Leu-Tyr-Leu-|-Tyr-Trp, in which cleavage of the -Tyr-|-Leu- and -Tyr-|-Trp bonds also occurs).. Its function is as follows. Cleaves peptides in various proteins in a process that requires ATP hydrolysis. Has a chymotrypsin-like activity. Plays a major role in the degradation of misfolded proteins. Essential protein required for chloroplast development and integrity. Essential for Embryogenesis. The chain is ATP-dependent Clp protease proteolytic subunit 4, chloroplastic from Arabidopsis thaliana (Mouse-ear cress).